The chain runs to 124 residues: MATINQLVNSPRKRSVVKSKVPALKACPQRRGVCTRVYTTTPKKPNSALRKVARVRLTSGFEVTSYIGGEGHNLQEHSVVLIRGGRVKDLPGVRYHIVRGALDTSGVNNRKHGRSKYGTKRPKS.

Residue Asp-89 is modified to 3-methylthioaspartic acid. The interval 102–124 is disordered; sequence LDTSGVNNRKHGRSKYGTKRPKS. Residues 109-124 are compositionally biased toward basic residues; that stretch reads NRKHGRSKYGTKRPKS.

Belongs to the universal ribosomal protein uS12 family. As to quaternary structure, part of the 30S ribosomal subunit. Contacts proteins S8 and S17. May interact with IF1 in the 30S initiation complex.

In terms of biological role, with S4 and S5 plays an important role in translational accuracy. Interacts with and stabilizes bases of the 16S rRNA that are involved in tRNA selection in the A site and with the mRNA backbone. Located at the interface of the 30S and 50S subunits, it traverses the body of the 30S subunit contacting proteins on the other side and probably holding the rRNA structure together. The combined cluster of proteins S8, S12 and S17 appears to hold together the shoulder and platform of the 30S subunit. The chain is Small ribosomal subunit protein uS12 from Francisella philomiragia subsp. philomiragia (strain ATCC 25017 / CCUG 19701 / FSC 153 / O#319-036).